The primary structure comprises 63 residues: Large ribosomal subunit protein bL28 (63 aa).

The protein belongs to the bacterial ribosomal protein bL28 family.

This is Large ribosomal subunit protein bL28 from Heliobacterium modesticaldum (strain ATCC 51547 / Ice1).